The sequence spans 169 residues: Transmembrane protein B169L (169 aa).

Transmembrane regions (helical) follow at residues 28–48 and 60–80; these read NPFIVALIITAVVLVVFFAIC and TAIYVYICIVALLFLHYYVLN. N88 is a glycosylation site (N-linked (GlcNAc...) asparagine; by host). A disordered region spans residues 107 to 169; it reads DEIIPPISPP…EVIMPSQYNN (63 aa). Residues 140-154 are compositionally biased toward low complexity; sequence KPADSKPASSADSKP.

Belongs to the asfivirus B169L family.

Its subcellular location is the host membrane. It localises to the virion. This Ornithodoros (relapsing fever ticks) protein is Transmembrane protein B169L.